The following is a 466-amino-acid chain: Ribulose bisphosphate carboxylase large chain (466 aa).

Position 4 is an N6,N6,N6-trimethyllysine (Lys4). Substrate contacts are provided by Asn113 and Thr163. Residue Lys165 is the Proton acceptor of the active site. Substrate is bound at residue Lys167. Mg(2+)-binding residues include Lys191, Asp193, and Glu194. Lys191 is modified (N6-carboxylysine). The active-site Proton acceptor is His284. Substrate-binding residues include Arg285, His317, and Ser369.

This sequence belongs to the RuBisCO large chain family. Type I subfamily. Heterohexadecamer of 8 large chains and 8 small chains; disulfide-linked. The disulfide link is formed within the large subunit homodimers. The cofactor is Mg(2+). Post-translationally, the disulfide bond which can form in the large chain dimeric partners within the hexadecamer appears to be associated with oxidative stress and protein turnover.

The protein resides in the plastid. Its subcellular location is the chloroplast. The catalysed reaction is 2 (2R)-3-phosphoglycerate + 2 H(+) = D-ribulose 1,5-bisphosphate + CO2 + H2O. It catalyses the reaction D-ribulose 1,5-bisphosphate + O2 = 2-phosphoglycolate + (2R)-3-phosphoglycerate + 2 H(+). RuBisCO catalyzes two reactions: the carboxylation of D-ribulose 1,5-bisphosphate, the primary event in carbon dioxide fixation, as well as the oxidative fragmentation of the pentose substrate in the photorespiration process. Both reactions occur simultaneously and in competition at the same active site. The chain is Ribulose bisphosphate carboxylase large chain from Pinguicula caerulea (Blueflower butterwort).